A 113-amino-acid polypeptide reads, in one-letter code: UPF0342 protein SpyM3_0545 (113 aa).

This sequence belongs to the UPF0342 family.

This is UPF0342 protein SpyM3_0545 from Streptococcus pyogenes serotype M3 (strain ATCC BAA-595 / MGAS315).